The primary structure comprises 195 residues: Thymidine kinase (195 aa).

ATP is bound by residues 9-16 (ATMNAGKS) and 89-92 (DEAQ). Glu-90 functions as the Proton acceptor in the catalytic mechanism. Zn(2+) is bound by residues Cys-147, Cys-149, Cys-184, and His-187.

The protein belongs to the thymidine kinase family. Homotetramer.

The protein resides in the cytoplasm. It carries out the reaction thymidine + ATP = dTMP + ADP + H(+). The protein is Thymidine kinase of Rhizobium meliloti (strain 1021) (Ensifer meliloti).